The sequence spans 218 residues: Recombination protein RecR (218 aa).

The C4-type zinc-finger motif lies at 56-71; it reads CRICCNISRDEVCRIC. Residues 79 to 195 form the Toprim domain; sequence GLICVVEEPK…VVSRLASGMP (117 aa).

The protein belongs to the RecR family.

Functionally, may play a role in DNA repair. It seems to be involved in an RecBC-independent recombinational process of DNA repair. It may act with RecF and RecO. This Corynebacterium efficiens (strain DSM 44549 / YS-314 / AJ 12310 / JCM 11189 / NBRC 100395) protein is Recombination protein RecR.